The primary structure comprises 206 residues: Type III pantothenate kinase (206 aa).

ATP is bound at residue 5–12 (DIGNTFLH). Residues Tyr-69 and 73–76 (GVDR) contribute to the substrate site. Asp-75 serves as the catalytic Proton acceptor. Asp-90 contacts K(+). Ser-93 is a binding site for ATP. A substrate-binding site is contributed by Thr-145.

Belongs to the type III pantothenate kinase family. In terms of assembly, homodimer. The cofactor is NH4(+). Requires K(+) as cofactor.

The protein resides in the cytoplasm. It catalyses the reaction (R)-pantothenate + ATP = (R)-4'-phosphopantothenate + ADP + H(+). The protein operates within cofactor biosynthesis; coenzyme A biosynthesis; CoA from (R)-pantothenate: step 1/5. Functionally, catalyzes the phosphorylation of pantothenate (Pan), the first step in CoA biosynthesis. The chain is Type III pantothenate kinase from Helicobacter hepaticus (strain ATCC 51449 / 3B1).